Consider the following 75-residue polypeptide: Small ribosomal subunit protein bS16 (75 aa).

Belongs to the bacterial ribosomal protein bS16 family.

The polypeptide is Small ribosomal subunit protein bS16 (Campylobacter jejuni subsp. jejuni serotype O:23/36 (strain 81-176)).